A 660-amino-acid chain; its full sequence is Solute carrier family 5 member 4 (660 aa).

Topologically, residues 1 to 28 are cytoplasmic; it reads MASTLSPSTVTKTPGPPEISERIQNAAD. A helical membrane pass occupies residues 29 to 47; sequence ISVIVIYFVVVMAVGLWAM. The Extracellular portion of the chain corresponds to 48 to 64; the sequence is LRTNRGTVGGFFLAGRD. Residues 65 to 85 form a helical membrane-spanning segment; that stretch reads VTWWPMGASLFASNIGSGHFV. Over 86–105 the chain is Cytoplasmic; sequence GLAGTGAASGIAIAAFEWNA. The chain crosses the membrane as a helical span at residues 106–126; the sequence is LLLLLVLGWFFVPIYIKAGVM. The Extracellular portion of the chain corresponds to 127 to 171; the sequence is TMPEYLRKRFGGKRLQIYLSILSLFICVALRISSDIFSGAIFIKL. Residues 172 to 191 form a helical membrane-spanning segment; sequence ALGLDLYLAIFSLLAITAIY. The Cytoplasmic segment spans residues 192-208; sequence TITGGLASVIYTDTLQT. Residues 209–229 form a helical membrane-spanning segment; sequence IIMLIGSFILMGFAFVEVGGY. Over 230–270 the chain is Extracellular; it reads ESFTEKYMNAIPTIVEGDNLTISPKCYTPQGDSFHIFRDAV. The N-linked (GlcNAc...) asparagine glycan is linked to N248. The chain crosses the membrane as a helical span at residues 271 to 291; it reads TGDIPWPGMIFGMTVVAAWYW. The Cytoplasmic portion of the chain corresponds to 292-314; that stretch reads CTDQVIVQRCLSGKDMSHVKAAC. The helical transmembrane segment at 315 to 334 threads the bilayer; that stretch reads IMCGYLKLLPMFLMVMPGMI. Topologically, residues 335-423 are extracellular; it reads SRILYTEKVA…RKQASEKELL (89 aa). Residues 424 to 443 traverse the membrane as a helical segment; sequence IAGRLFIILLIVISIVWVPL. Residues 444–455 lie on the Cytoplasmic side of the membrane; the sequence is VQVAQNGQLFHY. A helical membrane pass occupies residues 456–476; sequence IESISSYLGPPIAAVFLLAIF. Residues 477-526 lie on the Extracellular side of the membrane; the sequence is CKRVNEQGAFWGLIIGFVMGLIRMIAEFVYGTGSCLAASNCPQIICGVHY. A helical transmembrane segment spans residues 527–547; sequence LYFALILFFVSILVVLAISLL. Topologically, residues 548-638 are cytoplasmic; that stretch reads TKPIPDVHLY…TDTSEKPLWK (91 aa). Residues 639-659 traverse the membrane as a helical segment; it reads TIVNINAILLLAVAVFVHGYF.

It belongs to the sodium:solute symporter (SSF) (TC 2.A.21) family. In terms of tissue distribution, kidney, intestine, liver, skeletal muscle and spleen.

Its subcellular location is the cell membrane. The enzyme catalyses D-glucose(out) + 2 Na(+)(out) = D-glucose(in) + 2 Na(+)(in). Its activity is regulated as follows. Inhibited by phlorizin. Functionally, low-affinity sodium/D-glucose symporter with a great selectivity for sugars (D-glucose &gt;&gt; D-galactose). Na(+) and D-glucose transport are tightly coupled at neutral pH, but at acidic pH, ion transport is uncoupled from sugar transport. In Sus scrofa (Pig), this protein is Solute carrier family 5 member 4.